The sequence spans 104 residues: Small ribosomal subunit protein uS10 (104 aa).

This sequence belongs to the universal ribosomal protein uS10 family. In terms of assembly, part of the 30S ribosomal subunit.

Its function is as follows. Involved in the binding of tRNA to the ribosomes. This chain is Small ribosomal subunit protein uS10, found in Variovorax paradoxus (strain S110).